Reading from the N-terminus, the 96-residue chain is Protein Vpr (96 aa).

The homooligomerization stretch occupies residues 1–42 (MEQAPEDQGPQREPHNEWTLELLEEIKNEAVRHFPRVWLHQL). 3 positions are modified to phosphoserine; by host: Ser-79, Ser-94, and Ser-96.

The protein belongs to the HIV-1 VPR protein family. Homooligomer, may form homodimer. Interacts with p6-gag region of the Pr55 Gag precursor protein through a (Leu-X-X)4 motif near the C-terminus of the P6gag protein. Interacts with host UNG. May interact with host RAD23A/HHR23A. Interacts with host VPRBP/DCAF1, leading to hijack the CUL4A-RBX1-DDB1-DCAF1/VPRBP complex, mediating ubiquitination of host proteins such as TERT and ZGPAT and arrest of the cell cycle in G2 phase. Post-translationally, phosphorylated on several residues by host. These phosphorylations regulate VPR activity for the nuclear import of the HIV-1 pre-integration complex.

It localises to the virion. The protein resides in the host nucleus. Its subcellular location is the host extracellular space. Its function is as follows. During virus replication, may deplete host UNG protein, and incude G2-M cell cycle arrest. Acts by targeting specific host proteins for degradation by the 26S proteasome, through association with the cellular CUL4A-DDB1 E3 ligase complex by direct interaction with host VPRPB/DCAF-1. Cell cycle arrest reportedly occurs within hours of infection and is not blocked by antiviral agents, suggesting that it is initiated by the VPR carried into the virion. Additionally, VPR induces apoptosis in a cell cycle dependent manner suggesting that these two effects are mechanistically linked. Detected in the serum and cerebrospinal fluid of AIDS patient, VPR may also induce cell death to bystander cells. In terms of biological role, during virus entry, plays a role in the transport of the viral pre-integration (PIC) complex to the host nucleus. This function is crucial for viral infection of non-dividing macrophages. May act directly at the nuclear pore complex, by binding nucleoporins phenylalanine-glycine (FG)-repeat regions. The chain is Protein Vpr from Homo sapiens (Human).